Consider the following 361-residue polypeptide: 3-dehydroquinate synthase (361 aa).

Belongs to the archaeal-type DHQ synthase family.

The catalysed reaction is 2-amino-2,3,7-trideoxy-D-lyxo-hept-6-ulosonate + NAD(+) + H2O = 3-dehydroquinate + NH4(+) + NADH + H(+). Catalyzes the oxidative deamination and cyclization of 2-amino-3,7-dideoxy-D-threo-hept-6-ulosonic acid (ADH) to yield 3-dehydroquinate (DHQ), which is fed into the canonical shikimic pathway of aromatic amino acid biosynthesis. The polypeptide is 3-dehydroquinate synthase (Methanococcus maripaludis (strain C6 / ATCC BAA-1332)).